The sequence spans 319 residues: Glycine--tRNA ligase alpha subunit (319 aa).

The protein belongs to the class-II aminoacyl-tRNA synthetase family. As to quaternary structure, tetramer of two alpha and two beta subunits.

It localises to the cytoplasm. The enzyme catalyses tRNA(Gly) + glycine + ATP = glycyl-tRNA(Gly) + AMP + diphosphate. This is Glycine--tRNA ligase alpha subunit from Oenococcus oeni (strain ATCC BAA-331 / PSU-1).